We begin with the raw amino-acid sequence, 3974 residues long: Hybrid PKS-NRPS synthetase 1 (3974 aa).

The Ketosynthase family 3 (KS3) domain occupies 5–442; the sequence is SQKIAIIGSA…GTNAHCLIES (438 aa). Residues Cys179, His316, and His362 each act as for beta-ketoacyl synthase activity in the active site. The segment at 561-883 is malonyl-CoA:ACP transacylase (MAT) domain; that stretch reads IFTGQGAQWA…TGILERGLDD (323 aa). The N-terminal hotdog fold stretch occupies residues 954-1079; sequence HPLLGSRLSA…HDSELGIPES (126 aa). Residues 954-1251 form a dehydratase (DH) domain region; that stretch reads HPLLGSRLSA…QVESVKLVPV (298 aa). In terms of domain architecture, PKS/mFAS DH spans 954-1257; it reads HPLLGSRLSA…LVPVITPDAS (304 aa). The Proton acceptor; for dehydratase activity role is filled by His986. The segment at 1107-1257 is C-terminal hotdog fold; the sequence is TTPISSAKIY…LVPVITPDAS (151 aa). Asp1165 acts as the Proton donor; for dehydratase activity in catalysis. The tract at residues 1398-1529 is methyltransferase (MT) domain; sequence PWNTELRNAI…GYLLLVAKTG (132 aa). A ketoreductase (KR) domain region spans residues 2108–2282; sequence TYFLAGMTDS…ASIMDTGVVT (175 aa). The segment at 2492–2516 is disordered; that stretch reads AGRSASPGASCSDRSLSTRSDETRS. Residues 2498–2509 are compositionally biased toward polar residues; it reads PGASCSDRSLST. Residues 2560–2994 are condensation (C) domain; sequence APLSPGQAQL…LERLRTSSDQ (435 aa). Positions 3021 to 3423 are adenylation (A) (KR) domain; the sequence is DAMAEKYFDQ…DGSLILLGRM (403 aa). The region spanning 3537-3613 is the Carrier domain; sequence SADQLVEAEV…EMAEKMASVR (77 aa). O-(pantetheine 4'-phosphoryl)serine is present on Ser3573. The interval 3657–3940 is reductase (RED) domain; it reads VVLTGAADLL…KLEMGEWIAL (284 aa).

The protein in the C-terminal section; belongs to the NRP synthetase family.

Its pathway is secondary metabolite biosynthesis. Hybrid PKS-NRPS synthetase; part of the hps1-dma1 gene cluster that probably mediates the biosynthesis a derivative of cyclopiazonic acid (CPA). The hybrid polyketide synthase-nonribosomal peptide synthetase (PKS-NRPS) nps1 might incorporates acetyl-CoA, malonyl-CoA, and tryptophan (Trp) and utilizes a C-terminal redox-incompetent reductase domain to make and release the tryptophan tetramic acid, cyclo-acetoacetyl-L-tryptophan (c-AATrp), as the first intermediate in the pathway. In addition, the cluster also includes the tryptophan dimethylallyltransferase dma1, the FAD-dependent oxidoreductase toxD, the cytochrome P450 monooxygenase cyp3.1 and the methyltransferase DOTSEDRAFT_139328; the latter 2 being not present in all CPA-producing fungi but involved in additional modifications that occur in biosynthesis the of a range of CPA and CPA-like products. Further studies are required to clarify whether the CPA-like hps1-dma1 cluster is functional or a non-functional relic reflecting evolution of D.septosporum. The polypeptide is Hybrid PKS-NRPS synthetase 1 (Dothistroma septosporum (strain NZE10 / CBS 128990) (Red band needle blight fungus)).